Reading from the N-terminus, the 271-residue chain is 4-hydroxy-tetrahydrodipicolinate reductase (271 aa).

NAD(+) contacts are provided by residues 10–15 (GAGGRM), Glu36, 100–102 (GTT), and 124–127 (SGNM). The active-site Proton donor/acceptor is the His157. His158 lines the (S)-2,3,4,5-tetrahydrodipicolinate pocket. Lys161 functions as the Proton donor in the catalytic mechanism. Position 167 to 168 (167 to 168 (GT)) interacts with (S)-2,3,4,5-tetrahydrodipicolinate.

Belongs to the DapB family.

The protein resides in the cytoplasm. It carries out the reaction (S)-2,3,4,5-tetrahydrodipicolinate + NAD(+) + H2O = (2S,4S)-4-hydroxy-2,3,4,5-tetrahydrodipicolinate + NADH + H(+). The catalysed reaction is (S)-2,3,4,5-tetrahydrodipicolinate + NADP(+) + H2O = (2S,4S)-4-hydroxy-2,3,4,5-tetrahydrodipicolinate + NADPH + H(+). Its pathway is amino-acid biosynthesis; L-lysine biosynthesis via DAP pathway; (S)-tetrahydrodipicolinate from L-aspartate: step 4/4. Catalyzes the conversion of 4-hydroxy-tetrahydrodipicolinate (HTPA) to tetrahydrodipicolinate. This chain is 4-hydroxy-tetrahydrodipicolinate reductase, found in Rhodopseudomonas palustris (strain BisB5).